The chain runs to 96 residues: Co-chaperonin GroES (96 aa).

It belongs to the GroES chaperonin family. Heptamer of 7 subunits arranged in a ring. Interacts with the chaperonin GroEL.

The protein localises to the cytoplasm. Together with the chaperonin GroEL, plays an essential role in assisting protein folding. The GroEL-GroES system forms a nano-cage that allows encapsulation of the non-native substrate proteins and provides a physical environment optimized to promote and accelerate protein folding. GroES binds to the apical surface of the GroEL ring, thereby capping the opening of the GroEL channel. This chain is Co-chaperonin GroES, found in Dechloromonas aromatica (strain RCB).